Reading from the N-terminus, the 167-residue chain is Photosystem I assembly protein Ycf3 (167 aa).

3 TPR repeats span residues A35–A68, S72–L105, and G120–N153.

The protein belongs to the Ycf3 family.

It is found in the plastid. It localises to the chloroplast thylakoid membrane. Essential for the assembly of the photosystem I (PSI) complex. May act as a chaperone-like factor to guide the assembly of the PSI subunits. This Stigeoclonium helveticum (Green alga) protein is Photosystem I assembly protein Ycf3.